We begin with the raw amino-acid sequence, 287 residues long: Elongation factor Ts (287 aa).

Residues T80–L83 form an involved in Mg(2+) ion dislocation from EF-Tu region.

It belongs to the EF-Ts family.

The protein resides in the cytoplasm. In terms of biological role, associates with the EF-Tu.GDP complex and induces the exchange of GDP to GTP. It remains bound to the aminoacyl-tRNA.EF-Tu.GTP complex up to the GTP hydrolysis stage on the ribosome. In Pseudomonas syringae pv. syringae (strain B728a), this protein is Elongation factor Ts.